The primary structure comprises 425 residues: Serine--tRNA ligase (425 aa).

Residue 230–232 (TAE) participates in L-serine binding. Residue 261 to 263 (RSE) participates in ATP binding. Glu284 is a binding site for L-serine. 348-351 (EISS) contacts ATP. Residue Ser384 coordinates L-serine.

It belongs to the class-II aminoacyl-tRNA synthetase family. Type-1 seryl-tRNA synthetase subfamily. Homodimer. The tRNA molecule binds across the dimer.

It localises to the cytoplasm. It catalyses the reaction tRNA(Ser) + L-serine + ATP = L-seryl-tRNA(Ser) + AMP + diphosphate + H(+). The catalysed reaction is tRNA(Sec) + L-serine + ATP = L-seryl-tRNA(Sec) + AMP + diphosphate + H(+). It participates in aminoacyl-tRNA biosynthesis; selenocysteinyl-tRNA(Sec) biosynthesis; L-seryl-tRNA(Sec) from L-serine and tRNA(Sec): step 1/1. In terms of biological role, catalyzes the attachment of serine to tRNA(Ser). Is also able to aminoacylate tRNA(Sec) with serine, to form the misacylated tRNA L-seryl-tRNA(Sec), which will be further converted into selenocysteinyl-tRNA(Sec). This Streptococcus agalactiae serotype Ia (strain ATCC 27591 / A909 / CDC SS700) protein is Serine--tRNA ligase.